Reading from the N-terminus, the 419-residue chain is G protein-activated inward rectifier potassium channel 4 (419 aa).

The Cytoplasmic portion of the chain corresponds to 1–86; it reads MAGDSRNAMN…LFTTLVDLKW (86 aa). Serine 5 carries the post-translational modification Phosphoserine. The chain crosses the membrane as a helical span at residues 87-111; the sequence is RFNLLVFTMVYTITWLFFGFIWWLI. The Extracellular portion of the chain corresponds to 112 to 135; that stretch reads AYVRGDLDHVGDQEWIPCVENLSG. An intramembrane region (helical; Pore-forming) is located at residues 136–147; the sequence is FVSAFLFSIETE. An intramembrane region (pore-forming) is located at residues 148-154; that stretch reads TTIGYGF. Residues 149–154 carry the Selectivity filter motif; the sequence is TIGYGF. Over 155–163 the chain is Extracellular; the sequence is RVITEKCPE. A helical membrane pass occupies residues 164–185; the sequence is GIILLLVQAILGSIVNAFMVGC. Residues 186-419 lie on the Cytoplasmic side of the membrane; that stretch reads MFVKISQPKK…SVSQATRGSM (234 aa). Residues 388–419 are disordered; that stretch reads GCAEAGNEAEAEKDEEGEPNGLSVSQATRGSM. Acidic residues predominate over residues 394-405; sequence NEAEAEKDEEGE. Positions 409 to 419 are enriched in polar residues; that stretch reads LSVSQATRGSM.

This sequence belongs to the inward rectifier-type potassium channel (TC 1.A.2.1) family. KCNJ5 subfamily. In terms of assembly, associates with KCNJ3/GIRK1 to form a G-protein-activated heteromultimer pore-forming unit. Associates with KCNJ6/GRIK2 to form a G-protein-activated heteromultimer pore-forming unit. Expressed in the heart.

Its subcellular location is the membrane. It catalyses the reaction K(+)(in) = K(+)(out). Its activity is regulated as follows. Heteromultimer composed of KCNJ3/GIRK1 and KCNJ5/GIRK4 is activated by phosphatidylinositol 4,5 biphosphate (PtdIns(4,5)P2). Functionally, inward rectifier potassium channels are characterized by a greater tendency to allow potassium to flow into the cell rather than out of it. Their voltage dependence is regulated by the concentration of extracellular potassium; as external potassium is raised, the voltage range of the channel opening shifts to more positive voltages. The inward rectification is mainly due to the blockage of outward current by internal magnesium. Can be blocked by external barium. This potassium channel is controlled by G proteins. Forms a functional channel in association with KCNJ3/GIRK1. This chain is G protein-activated inward rectifier potassium channel 4 (Kcnj5), found in Mus musculus (Mouse).